Reading from the N-terminus, the 64-residue chain is Conotoxin VnMRCL-04 (64 aa).

The signal sequence occupies residues 1 to 22 (MRCLPVFVILLLLIASAPSVDA). The propeptide occupies 23–48 (RPKTKDDVPLASFHGNAERTLLNILR). The residue at position 63 (Trp-63) is a Tryptophan amide.

The protein belongs to the conotoxin T superfamily. In terms of processing, contains 2 disulfide bonds that can be either 'C1-C3, C2-C4' or 'C1-C4, C2-C3', since these disulfide connectivities have been observed for conotoxins with cysteine framework V (for examples, see AC P0DQQ7 and AC P81755). As to expression, expressed by the venom duct.

The protein resides in the secreted. This Conus ventricosus (Mediterranean cone) protein is Conotoxin VnMRCL-04.